The primary structure comprises 192 residues: NAD(P)H-quinone oxidoreductase subunit J, organellar chromatophore (192 aa).

The protein belongs to the complex I 30 kDa subunit family. NDH is composed of at least 16 different subunits, 5 of which are encoded in the nucleus.

It localises to the plastid. The protein resides in the organellar chromatophore thylakoid membrane. It carries out the reaction a quinone + NADH + H(+) = a quinol + NAD(+). Its function is as follows. NDH-1 shuttles electrons from NADH, via FMN and iron-sulfur (Fe-S) centers, to quinones in the respiratory chain. Couples the redox reaction to proton translocation (for every two electrons transferred, four hydrogen ions are translocated across the cytoplasmic membrane), and thus conserves the redox energy in a proton gradient. This chain is NAD(P)H-quinone oxidoreductase subunit J, organellar chromatophore, found in Paulinella chromatophora.